Here is a 247-residue protein sequence, read N- to C-terminus: Adenosylcobinamide-GDP ribazoletransferase (247 aa).

6 helical membrane-spanning segments follow: residues 31–51, 55–75, 109–129, 135–155, 183–203, and 227–247; these read ILFY…VTCI, LPAL…TGGL, IGVL…YVLI, LFLI…FLTT, VLLL…GFLI, and AIEI…FYLV.

Belongs to the CobS family. Mg(2+) is required as a cofactor.

It localises to the cell inner membrane. It carries out the reaction alpha-ribazole + adenosylcob(III)inamide-GDP = adenosylcob(III)alamin + GMP + H(+). The enzyme catalyses alpha-ribazole 5'-phosphate + adenosylcob(III)inamide-GDP = adenosylcob(III)alamin 5'-phosphate + GMP + H(+). It functions in the pathway cofactor biosynthesis; adenosylcobalamin biosynthesis; adenosylcobalamin from cob(II)yrinate a,c-diamide: step 7/7. Joins adenosylcobinamide-GDP and alpha-ribazole to generate adenosylcobalamin (Ado-cobalamin). Also synthesizes adenosylcobalamin 5'-phosphate from adenosylcobinamide-GDP and alpha-ribazole 5'-phosphate. The sequence is that of Adenosylcobinamide-GDP ribazoletransferase from Acinetobacter baumannii (strain ATCC 17978 / DSM 105126 / CIP 53.77 / LMG 1025 / NCDC KC755 / 5377).